The chain runs to 164 residues: Transcription factor MafF (164 aa).

Residues 51–76 are basic motif; that stretch reads RLKQRRRTLKNRGYAASCRVKRVCQK. In terms of domain architecture, bZIP spans 51–114; sequence RLKQRRRTLK…DALRGKCEAL (64 aa). Residues 79–93 are leucine-zipper; the sequence is LQKQKSELEREVDKL. A disordered region spans residues 141–164; sequence KSTPGSGSGPAHGPDPAHGPASCS. A compositionally biased stretch (low complexity) spans 149-164; sequence GPAHGPDPAHGPASCS.

The protein belongs to the bZIP family. Maf subfamily. As to quaternary structure, monomer and homo- or heterodimer. Interacts with MIP. Forms high affinity heterodimers with members of the CNC-bZIP family such as NFE2L1/NRF1. In terms of tissue distribution, expressed in the term myometrium and kidney.

It localises to the nucleus. Since they lack a putative transactivation domain, the small Mafs behave as transcriptional repressors when they dimerize among themselves. However, they seem to serve as transcriptional activators by dimerizing with other (usually larger) basic-zipper proteins, such as NFE2L1/NRF1, and recruiting them to specific DNA-binding sites. Interacts with the upstream promoter region of the oxytocin receptor gene. May be a transcriptional enhancer in the up-regulation of the oxytocin receptor gene at parturition. The chain is Transcription factor MafF (MAFF) from Homo sapiens (Human).